The sequence spans 87 residues: Small ribosomal subunit protein bS20 (87 aa).

Belongs to the bacterial ribosomal protein bS20 family.

In terms of biological role, binds directly to 16S ribosomal RNA. The sequence is that of Small ribosomal subunit protein bS20 from Clostridium botulinum (strain Eklund 17B / Type B).